A 138-amino-acid polypeptide reads, in one-letter code: Basic phospholipase A2 PLA-N (138 aa).

The first 16 residues, 1 to 16 (MRTLWIMAVLLVGVEG), serve as a signal peptide directing secretion. Intrachain disulfides connect Cys42–Cys131, Cys44–Cys60, Cys59–Cys111, Cys65–Cys138, Cys66–Cys104, Cys73–Cys97, and Cys91–Cys102. Ca(2+) is bound by residues Tyr43, Gly45, and Gly47. His63 is a catalytic residue. Position 64 (Asp64) interacts with Ca(2+). Asp105 is an active-site residue.

This sequence belongs to the phospholipase A2 family. Group II subfamily. D49 sub-subfamily. Ca(2+) serves as cofactor. In terms of tissue distribution, expressed by the venom gland.

The protein localises to the secreted. The catalysed reaction is a 1,2-diacyl-sn-glycero-3-phosphocholine + H2O = a 1-acyl-sn-glycero-3-phosphocholine + a fatty acid + H(+). Functionally, snake venom phospholipase A2 (PLA2) that displays edema-inducing activities, as well as presynaptic neurotoxicity and myotoxicity. PLA2 catalyzes the calcium-dependent hydrolysis of the 2-acyl groups in 3-sn-phosphoglycerides. The chain is Basic phospholipase A2 PLA-N from Protobothrops flavoviridis (Habu).